Consider the following 214-residue polypeptide: Putative pit accessory protein (214 aa).

The protein belongs to the UPF0111 family.

Its function is as follows. Could be involved in orthophosphate transport. This chain is Putative pit accessory protein, found in Rhizobium meliloti (strain 1021) (Ensifer meliloti).